The following is a 100-amino-acid chain: Replication restart protein PriB (100 aa).

Residues 1–100 (MTNRMELSGT…VLHADNITQI (100 aa)) enclose the SSB domain.

This sequence belongs to the PriB family. In terms of assembly, homodimer. Interacts with PriA and DnaT. Component of the replication restart primosome. Primosome assembly occurs via a 'hand-off' mechanism. PriA binds to replication forks, subsequently PriB then DnaT bind; DnaT then displaces ssDNA to generate the helicase loading substrate.

Functionally, involved in the restart of stalled replication forks, which reloads the replicative helicase on sites other than the origin of replication; the PriA-PriB pathway is the major replication restart pathway. During primosome assembly it facilitates complex formation between PriA and DnaT on DNA; stabilizes PriA on DNA. Stimulates the DNA unwinding activity of PriA helicase. In Vibrio parahaemolyticus serotype O3:K6 (strain RIMD 2210633), this protein is Replication restart protein PriB.